A 366-amino-acid polypeptide reads, in one-letter code: Transmembrane protein 25 (366 aa).

Positions 1–26 (MALPPGPAALRHTLLLLPALLSSGWG) are cleaved as a signal peptide. At 27–232 (ELEPQIDGQT…APGLLATRVE (206 aa)) the chain is on the extracellular side. Positions 30–123 (PQIDGQTWAE…SGRSANASVI (94 aa)) constitute an Ig-like domain. A disulfide bridge links Cys52 with Cys107. Asn106, Asn162, Asn175, Asn192, and Asn205 each carry an N-linked (GlcNAc...) asparagine glycan. A helical transmembrane segment spans residues 233–253 (VPLLGIVVAAGLALGTLVGFS). The Cytoplasmic portion of the chain corresponds to 254–366 (TLVACLVCRK…SSVSSDEIWL (113 aa)). Residues 299–308 (PSNLQLNDLT) are compositionally biased toward polar residues. A disordered region spans residues 299–335 (PSNLQLNDLTPDSRAVKPADRQMAQNNSRPELLDPEP).

In terms of assembly, interacts with GRIN2B. In terms of tissue distribution, expressed throughout the brain with higher levels in the pyramidal cell layer of the hippocampal CA1 and CA3 regions. Also highly expressed within the hippocampal dentate gyrus region and cerebellum and in scattered neurons in the cerebral cortex.

It localises to the cell membrane. It is found in the secreted. Its subcellular location is the late endosome. The protein localises to the lysosome. In neurons, modulates the degradation of NMDA receptor GRIN2B subunit. Plays a role in the regulation of neuronal excitability. In Homo sapiens (Human), this protein is Transmembrane protein 25 (TMEM25).